Here is a 520-residue protein sequence, read N- to C-terminus: Ubiquitin carboxyl-terminal hydrolase 3 (520 aa).

Met1 bears the N-acetylmethionine mark. The UBP-type zinc-finger motif lies at 1 to 121 (MECPHLSSSV…QKVREHLQNL (121 aa)). Cys3, His5, Cys29, Cys32, Cys41, Cys44, Cys49, His56, His60, His82, Cys95, and Cys98 together coordinate Zn(2+). One can recognise a USP domain in the interval 159-511 (TGLRNLGNTC…KAYILFYVER (353 aa)). The active-site Nucleophile is Cys168. Residue His471 is the Proton acceptor of the active site.

It belongs to the peptidase C19 family. USP3 subfamily. In terms of assembly, interacts (via UBP-type domain) with H2A; the interaction is less efficient than with monoubiquitinated H2A.

It localises to the nucleus. The protein localises to the cytoplasm. The enzyme catalyses Thiol-dependent hydrolysis of ester, thioester, amide, peptide and isopeptide bonds formed by the C-terminal Gly of ubiquitin (a 76-residue protein attached to proteins as an intracellular targeting signal).. Functionally, deubiquitinase that plays a role in several cellular processes including transcriptional regulation, cell cycle progression or innate immunity. In response to DNA damage, deubiquitinates monoubiquitinated target proteins such as histone H2A and H2AX and thereby counteracts RNF168- and RNF8-mediated ubiquitination. In turn, participates in the recruitment of DNA damage repair factors to DNA break sites. Required for proper progression through S phase and subsequent mitotic entry. Acts as a positive regulator of TP53 by deubiquitinating and stabilizing it to promote normal cell proliferation and transformation. Participates in establishing tolerance innate immune memory through non-transcriptional feedback. Mechanistically, negatively regulates TLR-induced NF-kappa-B signaling by targeting and removing the 'Lys-63'-linked polyubiquitin chains on MYD88. Negatively regulates the activation of type I interferon signaling by mediating 'Lys-63'-linked polyubiquitin chains on RIGI and IFIH1. Also deubiquinates ASC/PYCARD, the central adapter mediating the assembly and activation of most inflammasomes, and thereby promotes inflammasome activation. This Mus musculus (Mouse) protein is Ubiquitin carboxyl-terminal hydrolase 3 (Usp3).